Consider the following 348-residue polypeptide: Competence protein ComGA (348 aa).

Position 145–152 (145–152 (GATGSGKT)) interacts with ATP.

Belongs to the GSP E family.

Its subcellular location is the cell membrane. In terms of biological role, required for uptake of DNA by competent cells. This Halalkalibacterium halodurans (strain ATCC BAA-125 / DSM 18197 / FERM 7344 / JCM 9153 / C-125) (Bacillus halodurans) protein is Competence protein ComGA (comGA).